Reading from the N-terminus, the 604-residue chain is Aspartate--tRNA(Asp/Asn) ligase (604 aa).

Residue E175 participates in L-aspartate binding. An aspartate region spans residues 199-202 (QQFK). The L-aspartate site is built by R221 and H456. 221–223 (RDE) is an ATP binding site. E496 is a binding site for ATP. R503 is a binding site for L-aspartate. Residue 548-551 (GVDR) coordinates ATP.

The protein belongs to the class-II aminoacyl-tRNA synthetase family. Type 1 subfamily. Homodimer.

The protein resides in the cytoplasm. It carries out the reaction tRNA(Asx) + L-aspartate + ATP = L-aspartyl-tRNA(Asx) + AMP + diphosphate. In terms of biological role, aspartyl-tRNA synthetase with relaxed tRNA specificity since it is able to aspartylate not only its cognate tRNA(Asp) but also tRNA(Asn). Reaction proceeds in two steps: L-aspartate is first activated by ATP to form Asp-AMP and then transferred to the acceptor end of tRNA(Asp/Asn). The polypeptide is Aspartate--tRNA(Asp/Asn) ligase (Methylorubrum populi (strain ATCC BAA-705 / NCIMB 13946 / BJ001) (Methylobacterium populi)).